The sequence spans 275 residues: Large ribosomal subunit protein uL2 (275 aa).

2 disordered regions span residues Leu-34 to Lys-59 and Val-223 to Lys-275.

It belongs to the universal ribosomal protein uL2 family. In terms of assembly, part of the 50S ribosomal subunit. Forms a bridge to the 30S subunit in the 70S ribosome.

Functionally, one of the primary rRNA binding proteins. Required for association of the 30S and 50S subunits to form the 70S ribosome, for tRNA binding and peptide bond formation. It has been suggested to have peptidyltransferase activity; this is somewhat controversial. Makes several contacts with the 16S rRNA in the 70S ribosome. The sequence is that of Large ribosomal subunit protein uL2 from Teredinibacter turnerae (strain ATCC 39867 / T7901).